The sequence spans 36 residues: Pancreatic polypeptide (36 aa).

Phe-36 is modified (phenylalanine amide).

Belongs to the NPY family.

The protein resides in the secreted. Functionally, hormone secreted by pancreatic cells that acts as a regulator of pancreatic and gastrointestinal functions. The polypeptide is Pancreatic polypeptide (ppy) (Aquarana catesbeiana (American bullfrog)).